Consider the following 596-residue polypeptide: uncharacterized protein (596 aa).

Positions lysine 44–aspartate 203 constitute a Helicase ATP-binding domain. The Helicase C-terminal domain occupies arginine 285–leucine 432. 2 disordered regions span residues leucine 420–glutamine 444 and glutamate 506–glycine 533. The span at lysine 510–arginine 523 shows a compositional bias: polar residues.

The protein to M.tuberculosis Rv2917.

This is an uncharacterized protein from Mycobacterium leprae (strain TN).